Here is a 117-residue protein sequence, read N- to C-terminus: MTVVTCVFLDHVHHDPAQGDSLIADVTSFLFGQVAGVVQSCVSDQLTAAGDLGLPRGHRLVEPSSRLQGKAIMVALPEDRWHVLTCEHTLEPVAFHLSHVLHESQQRHRRGRRRSKP.

The polypeptide is Mini-circle uncharacterized 12.9 kDa protein (Streptomyces coelicolor (strain ATCC BAA-471 / A3(2) / M145)).